Here is a 153-residue protein sequence, read N- to C-terminus: UPF0260 protein CKO_01185 (153 aa).

The protein belongs to the UPF0260 family.

The polypeptide is UPF0260 protein CKO_01185 (Citrobacter koseri (strain ATCC BAA-895 / CDC 4225-83 / SGSC4696)).